The following is a 344-amino-acid chain: Glutamine synthetase (344 aa).

In terms of domain architecture, GS beta-grasp spans 4-86; the sequence is YKLEYIWLDG…VMCEVMMPDG (83 aa). The 256-residue stretch at 89–344 folds into the GS catalytic domain; the sequence is PHASNKRATI…SVPTEKKAVA (256 aa). Mg(2+)-binding residues include Glu109 and Glu111. ATP is bound at residue Glu167. 2 residues coordinate Mg(2+): Glu172 and Glu179. An L-glutamate-binding site is contributed by Glu278.

Belongs to the glutamine synthetase family. In terms of assembly, homooctamer and homotetramer. It depends on Mg(2+) as a cofactor.

It is found in the cytoplasm. It carries out the reaction L-glutamate + NH4(+) + ATP = L-glutamine + ADP + phosphate + H(+). Its function is as follows. Catalyzes the ATP-dependent biosynthesis of glutamine from glutamate and ammonia. The chain is Glutamine synthetase from Bradyrhizobium diazoefficiens (strain JCM 10833 / BCRC 13528 / IAM 13628 / NBRC 14792 / USDA 110).